Consider the following 372-residue polypeptide: Molybdopterin synthase catalytic subunit (372 aa).

Substrate-binding positions include 101–102 (HR), lysine 117, and 124–126 (KKE).

This sequence belongs to the MoaE family. MOCS2B subfamily. Heterotetramer; composed of 2 small (Mocs2A) and 2 large (Mocs2B) subunits.

The protein resides in the cytoplasm. The catalysed reaction is 2 [molybdopterin-synthase sulfur-carrier protein]-C-terminal-Gly-aminoethanethioate + cyclic pyranopterin phosphate + H2O = molybdopterin + 2 [molybdopterin-synthase sulfur-carrier protein]-C-terminal Gly-Gly + 2 H(+). It functions in the pathway cofactor biosynthesis; molybdopterin biosynthesis. Its function is as follows. Catalytic subunit of the molybdopterin synthase complex, a complex that catalyzes the conversion of precursor Z into molybdopterin. Acts by mediating the incorporation of 2 sulfur atoms from thiocarboxylated Mocs2A into precursor Z to generate a dithiolene group. In Drosophila willistoni (Fruit fly), this protein is Molybdopterin synthase catalytic subunit.